We begin with the raw amino-acid sequence, 145 residues long: D-aminoacyl-tRNA deacylase (145 aa).

A Gly-cisPro motif, important for rejection of L-amino acids motif is present at residues 137 to 138 (GP).

The protein belongs to the DTD family. As to quaternary structure, homodimer.

The protein localises to the cytoplasm. It carries out the reaction glycyl-tRNA(Ala) + H2O = tRNA(Ala) + glycine + H(+). The catalysed reaction is a D-aminoacyl-tRNA + H2O = a tRNA + a D-alpha-amino acid + H(+). Functionally, an aminoacyl-tRNA editing enzyme that deacylates mischarged D-aminoacyl-tRNAs. Also deacylates mischarged glycyl-tRNA(Ala), protecting cells against glycine mischarging by AlaRS. Acts via tRNA-based rather than protein-based catalysis; rejects L-amino acids rather than detecting D-amino acids in the active site. By recycling D-aminoacyl-tRNA to D-amino acids and free tRNA molecules, this enzyme counteracts the toxicity associated with the formation of D-aminoacyl-tRNA entities in vivo and helps enforce protein L-homochirality. The sequence is that of D-aminoacyl-tRNA deacylase from Pseudomonas putida (strain ATCC 700007 / DSM 6899 / JCM 31910 / BCRC 17059 / LMG 24140 / F1).